Reading from the N-terminus, the 103-residue chain is Large ribosomal subunit protein bL21 (103 aa).

It belongs to the bacterial ribosomal protein bL21 family. In terms of assembly, part of the 50S ribosomal subunit. Contacts protein L20.

This protein binds to 23S rRNA in the presence of protein L20. The chain is Large ribosomal subunit protein bL21 from Thioalkalivibrio sulfidiphilus (strain HL-EbGR7).